We begin with the raw amino-acid sequence, 271 residues long: Delta(7)-sterol-C5(6)-desaturase (271 aa).

The next 2 membrane-spanning stretches (helical) occupy residues 44-64 (IGGVLLYFISGFLWCFYIYHL) and 120-140 (VGWLSYVIYAAIYLVIVEFGI). The region spanning 130 to 259 (AIYLVIVEFG…TIWMDWMFGT (130 aa)) is the Fatty acid hydroxylase domain. Positions 144–148 (HMELH) match the Histidine box-1 motif. Positions 158 to 162 (HATHH) match the Histidine box-2 motif. A helical membrane pass occupies residues 190–210 (HVVALLLVPMHFSTHIALIFL). The Histidine box-3 signature appears at 235 to 239 (HTIHH).

This sequence belongs to the sterol desaturase family. Requires Fe cation as cofactor.

The protein localises to the endoplasmic reticulum membrane. It catalyses the reaction a Delta(7)-sterol + 2 Fe(II)-[cytochrome b5] + O2 + 2 H(+) = a Delta(5),Delta(7)-sterol + 2 Fe(III)-[cytochrome b5] + 2 H2O. In terms of biological role, involved in the biosynthesis of sitosterol and campesterol. The sequence is that of Delta(7)-sterol-C5(6)-desaturase from Nicotiana tabacum (Common tobacco).